We begin with the raw amino-acid sequence, 130 residues long: MLVRQLDDILGTDADVKGETGTWASRRLLLKKDGMGFSLHDTIIYPGTETHLWYKNHLEAVYCIHGKGEIELVPSGELIPIRPGTMYALDKHDEHLLRASEELRLVCVFNPPLTGREDHDEDGAYPVLDD.

This sequence belongs to the ectoine synthase family.

It carries out the reaction (2S)-4-acetamido-2-aminobutanoate = L-ectoine + H2O. It participates in amine and polyamine biosynthesis; ectoine biosynthesis; L-ectoine from L-aspartate 4-semialdehyde: step 3/3. Catalyzes the circularization of gamma-N-acetyl-alpha,gamma-diaminobutyric acid (ADABA) to ectoine (1,4,5,6-tetrahydro-2-methyl-4-pyrimidine carboxylic acid), which is an excellent osmoprotectant. The sequence is that of L-ectoine synthase from Desulfatibacillum aliphaticivorans.